A 213-amino-acid chain; its full sequence is UPF0502 protein Daro_2469 (213 aa).

This sequence belongs to the UPF0502 family.

The sequence is that of UPF0502 protein Daro_2469 from Dechloromonas aromatica (strain RCB).